The chain runs to 189 residues: Peptidyl-tRNA hydrolase (189 aa).

Tyr14 is a binding site for tRNA. His19 functions as the Proton acceptor in the catalytic mechanism. The tRNA site is built by Tyr64, Asn66, and Asn112.

It belongs to the PTH family. Monomer.

It is found in the cytoplasm. It catalyses the reaction an N-acyl-L-alpha-aminoacyl-tRNA + H2O = an N-acyl-L-amino acid + a tRNA + H(+). In terms of biological role, hydrolyzes ribosome-free peptidyl-tRNAs (with 1 or more amino acids incorporated), which drop off the ribosome during protein synthesis, or as a result of ribosome stalling. Its function is as follows. Catalyzes the release of premature peptidyl moieties from peptidyl-tRNA molecules trapped in stalled 50S ribosomal subunits, and thus maintains levels of free tRNAs and 50S ribosomes. The chain is Peptidyl-tRNA hydrolase from Clostridium botulinum (strain Kyoto / Type A2).